A 1203-amino-acid polypeptide reads, in one-letter code: Cingulin (1203 aa).

Positions 7-357 (MAEPRGPVDH…VMISSGSTKA (351 aa)) are head. The disordered stretch occupies residues 25 to 48 (EPVSGAEMGTLRRGGRRPAKDARA). The ZIM motif lies at 48–62 (ASTYGVAVRVQGIAG). Positions 54–67 (AVRVQGIAGQPFVV) are interaction with TJP1/ZO1. Positions 89 to 268 (EASGALGSDF…PPSGFSRSRQ (180 aa)) are disordered. Phosphoserine is present on residues serine 96, serine 135, serine 137, serine 140, serine 155, and serine 165. The span at 166–191 (PGSTIDTAPLSSVDSLINKFDSQLGG) shows a compositional bias: polar residues. The segment covering 207-231 (EQRKRSKSLDSRLPRDTLEERERQS) has biased composition (basic and acidic residues). Phosphoserine occurs at positions 214, 217, 258, 276, 338, and 351. Over residues 246 to 267 (GSSKQPSQSQSPSPPSGFSRSR) the composition is skewed to low complexity. Residues 358-1160 (VAGQGELTRK…SLEKDSWRKA (803 aa)) are a coiled coil. At lysine 579 the chain carries N6-acetyllysine. The segment covering 883-903 (ARREVADAQRQAKDWASEAEK) has biased composition (basic and acidic residues). Disordered regions lie at residues 883–908 (ARRE…SGGL) and 1160–1181 (ASRS…EEFD). The segment at 1161–1203 (SRSAAESALKHEGLSSDEEFDSVYDPSSIASLLTESNLQTSSC) is tail. Residues serine 1175, serine 1176, and serine 1182 each carry the phosphoserine modification.

This sequence belongs to the cingulin family. Homodimer. Interacts with TJP1/ZO1 and SPEF1.

It is found in the cell junction. The protein localises to the tight junction. Probably plays a role in the formation and regulation of the tight junction (TJ) paracellular permeability barrier. The chain is Cingulin from Papio anubis (Olive baboon).